A 46-amino-acid polypeptide reads, in one-letter code: Esculentin-1 (46 aa).

The cysteines at positions 40 and 46 are disulfide-linked.

This sequence belongs to the frog skin active peptide (FSAP) family. Brevinin subfamily. In terms of tissue distribution, expressed by the skin glands.

It localises to the secreted. Shows antibacterial activity against representative Gram-negative and Gram-positive bacterial species, and hemolytic activity. In Pelophylax lessonae (Pool frog), this protein is Esculentin-1.